Reading from the N-terminus, the 478-residue chain is Protein nucleotidyltransferase YdiU (478 aa).

The ATP site is built by glycine 84, glycine 86, arginine 87, lysine 107, aspartate 119, glycine 120, arginine 170, and arginine 177. Catalysis depends on aspartate 246, which acts as the Proton acceptor. Asparagine 247 and aspartate 256 together coordinate Mg(2+). Aspartate 256 serves as a coordination point for ATP.

The protein belongs to the SELO family. Requires Mg(2+) as cofactor. The cofactor is Mn(2+).

The catalysed reaction is L-seryl-[protein] + ATP = 3-O-(5'-adenylyl)-L-seryl-[protein] + diphosphate. The enzyme catalyses L-threonyl-[protein] + ATP = 3-O-(5'-adenylyl)-L-threonyl-[protein] + diphosphate. It carries out the reaction L-tyrosyl-[protein] + ATP = O-(5'-adenylyl)-L-tyrosyl-[protein] + diphosphate. It catalyses the reaction L-histidyl-[protein] + UTP = N(tele)-(5'-uridylyl)-L-histidyl-[protein] + diphosphate. The catalysed reaction is L-seryl-[protein] + UTP = O-(5'-uridylyl)-L-seryl-[protein] + diphosphate. The enzyme catalyses L-tyrosyl-[protein] + UTP = O-(5'-uridylyl)-L-tyrosyl-[protein] + diphosphate. In terms of biological role, nucleotidyltransferase involved in the post-translational modification of proteins. It can catalyze the addition of adenosine monophosphate (AMP) or uridine monophosphate (UMP) to a protein, resulting in modifications known as AMPylation and UMPylation. The chain is Protein nucleotidyltransferase YdiU from Escherichia coli O17:K52:H18 (strain UMN026 / ExPEC).